Consider the following 756-residue polypeptide: MRTSQAIFILIFLDSVRNQSPQVIPAKWDVVYEKETGHNMSLTVFRFQVKEQYSVARIIMSCNESTEHNPLLAVFREKLAILSLQVPLIVDNYEYSQVARTLCPFTEYKEGEAFTVEVTSSRPVHYNFRAELVQNFYLYNNSQRLVTASASEPVYLRYDIPGDVDSVAVHLDSNSTICMTVSVQKIGCPVFDLPDNVNSMGLHQTMTTSATIPVEKSRMSSFYVVFVVNTNDDLCSEILSIKPNKPTKFPLRMKSFNVTIESSMKIFDYTIPIVFWACILLLVTIVVFVYHYFDGIWERRFVSRAYTHLEDNAQEQRIRDFYDFQRMSEDDDLKDYDLLTDCQDMMVVRAKASLTVADLSMTPYEERELKYDVYKIALAIIGIFYNITVLQLIISKAGSLRQSGDLDECTFNFQCARPLWYFVAFNNVVSNGGYVYFGTLIIVMNYCRERSFRRLFAVQPTLAERYGLPQHSGLMTAIGLAVIMEGISSATYHVCPNNINYQFDTALMYVIGMLGKLKIWSLRHPDMVVSAYHAFGFLGVFLMAAIAGVYVHNMIFWALFSIIYIASMLLVSLEFYFKGIWTLNLRELRNSIRLSWVSSRHLSCVVPAYKARFFVILLLNIANTAVVVYGLEAHPKDFLSFLLIPFIGNLFIYIIYYILMKMIYREKIPKRAIALLFAAVISWTCAGILFNQRVSDWSKMPAISRELNKPCIFLNFYDNHDLWHLSSAFAIFFSFTAINVIDDDLMFVMRNTIRVF.

The signal sequence occupies residues 1–18 (MRTSQAIFILIFLDSVRN). Residues 19–268 (QSPQVIPAKW…TIESSMKIFD (250 aa)) lie on the Extracellular side of the membrane. N39 and N63 each carry an N-linked (GlcNAc...) asparagine glycan. The Cholesterol-binding sequence motif motif lies at 124–129 (VHYNFR). N-linked (GlcNAc...) asparagine glycosylation is found at N140, N174, and N257. Residues 269–289 (YTIPIVFWACILLLVTIVVFV) traverse the membrane as a helical segment. Topologically, residues 290–373 (YHYFDGIWER…YEERELKYDV (84 aa)) are cytoplasmic. A helical transmembrane segment spans residues 374 to 394 (YKIALAIIGIFYNITVLQLII). Over 395–421 (SKAGSLRQSGDLDECTFNFQCARPLWY) the chain is Extracellular. A helical transmembrane segment spans residues 422–442 (FVAFNNVVSNGGYVYFGTLII). The Cytoplasmic portion of the chain corresponds to 443–473 (VMNYCRERSFRRLFAVQPTLAERYGLPQHSG). Residues 474–494 (LMTAIGLAVIMEGISSATYHV) traverse the membrane as a helical segment. Residues 495–498 (CPNN) lie on the Extracellular side of the membrane. Residues 499–517 (INYQFDTALMYVIGMLGKL) traverse the membrane as a helical segment. Topologically, residues 518-530 (KIWSLRHPDMVVS) are cytoplasmic. Residues 531-551 (AYHAFGFLGVFLMAAIAGVYV) form a helical membrane-spanning segment. Residues 552–554 (HNM) are Extracellular-facing. Residues 555-575 (IFWALFSIIYIASMLLVSLEF) form a helical membrane-spanning segment. Positions 570–578 (LVSLEFYFK) match the Cholesterol-binding sequence motif motif. Residues 576-612 (YFKGIWTLNLRELRNSIRLSWVSSRHLSCVVPAYKAR) lie on the Cytoplasmic side of the membrane. The chain crosses the membrane as a helical span at residues 613-633 (FFVILLLNIANTAVVVYGLEA). Residues 634-637 (HPKD) are Extracellular-facing. The chain crosses the membrane as a helical span at residues 638-658 (FLSFLLIPFIGNLFIYIIYYI). Over 659-671 (LMKMIYREKIPKR) the chain is Cytoplasmic. A helical transmembrane segment spans residues 672 to 692 (AIALLFAAVISWTCAGILFNQ). At 693-728 (RVSDWSKMPAISRELNKPCIFLNFYDNHDLWHLSSA) the chain is on the extracellular side. A helical transmembrane segment spans residues 729–749 (FAIFFSFTAINVIDDDLMFVM). The Cytoplasmic segment spans residues 750 to 756 (RNTIRVF).

This sequence belongs to the SID1 family. Highly expressed along the intestine with expression also detected in the pharynx, especially at the terminal bulb, and in the excretory gland cells.

Its subcellular location is the cell membrane. The catalysed reaction is cholesterol(in) = cholesterol(out). Functionally, cholesterol-binding protein which is involved in dietary cholesterol uptake from the environment. Does not play a role in double-stranded RNA transport in contrast to other SID1 family members. The protein is Cholesterol uptake protein 1 of Caenorhabditis elegans.